We begin with the raw amino-acid sequence, 402 residues long: Type II NADH:quinone oxidoreductase (402 aa).

Residues 12–16 (GAGYA), 39–40 (NK), and Val83 each bind FAD. Residue Glu172 is part of the active site. FAD contacts are provided by residues Asp302, 319–320 (AQ), and Lys379.

This sequence belongs to the NADH dehydrogenase family. FAD serves as cofactor.

Its subcellular location is the cell membrane. It carries out the reaction a quinone + NADH + H(+) = a quinol + NAD(+). Functionally, alternative, nonproton pumping NADH:quinone oxidoreductase that delivers electrons to the respiratory chain by oxidation of NADH and reduction of quinones, and contributes to the regeneration of NAD(+). In Staphylococcus epidermidis (strain ATCC 35984 / DSM 28319 / BCRC 17069 / CCUG 31568 / BM 3577 / RP62A), this protein is Type II NADH:quinone oxidoreductase.